A 314-amino-acid chain; its full sequence is METSHNQELVATILEDNVANELQTIQDFLRWTYSILNRSDIYFGQGHDNPWDESLQLVLSSLHLPIDLPTELFNSRLTPSEKETLVQLVLTRIEQRVPVAYLTNSAWFCGHEFYVDERTIIPRSPISALIQDRFEDLISQEPNHILDLCTGSGCIAIACAYAFPNAEVDAVDLSVDALNVAEINISRHQLEHRVFPIQSNLFENILGQKYDLIVTNPPYVDEEDLADMPEEFHFEPELALGSGSDGLNITKQILKQAPDYLTENGVLVCEVGNSMISLIEQYPDVPFEWVELKNGGLGVFAIQRKDLVKYHDLF.

This sequence belongs to the protein N5-glutamine methyltransferase family. PrmB subfamily.

It carries out the reaction L-glutaminyl-[ribosomal protein uL3] + S-adenosyl-L-methionine = N(5)-methyl-L-glutaminyl-[ribosomal protein uL3] + S-adenosyl-L-homocysteine + H(+). Methylates large ribosomal subunit protein uL3 on a specific glutamine residue. This is Ribosomal protein uL3 glutamine methyltransferase from Haemophilus influenzae (strain ATCC 51907 / DSM 11121 / KW20 / Rd).